A 565-amino-acid polypeptide reads, in one-letter code: Coiled-coil domain-containing protein 17 (565 aa).

Residues 58-87 (IMAQEKSRDQEASTSALKRLTEETAGSPGE) form a disordered region. Coiled coils occupy residues 97 to 160 (ARRM…TLGA) and 219 to 271 (LQLQ…KVLS).

The sequence is that of Coiled-coil domain-containing protein 17 (Ccdc17) from Mus musculus (Mouse).